The chain runs to 326 residues: Mitochondrial glycine transporter (326 aa).

Solcar repeat units lie at residues 22 to 106 (SKTT…LRTS), 135 to 216 (SANL…LKRY), and 228 to 312 (SSSS…LILR). Transmembrane regions (helical) follow at residues 28-53 (FGAGLLSGLTSSILLQPADLLKTRVQ), 81-107 (GTLPSALRTGFGSALYFTSLNALRTSL), 138-163 (LATGAAARVAAGFVMMPVTVLKVRYE), 191-214 (GFGATAARDAPYAGLYVLFYEQLK), 232-258 (INFVSGGLAAGLATAITNPFDAVKTRL), and 287-305 (GLGLRIGRKALSSALAWTV).

Belongs to the mitochondrial carrier (TC 2.A.29) family. SLC25A38 subfamily.

Its subcellular location is the mitochondrion inner membrane. The enzyme catalyses glycine(in) = glycine(out). In terms of biological role, mitochondrial glycine transporter that imports glycine into the mitochondrial matrix. Plays an important role in providing glycine for the first enzymatic step in heme biosynthesis, the condensation of glycine with succinyl-CoA to produce 5-aminolevulinate (ALA) in the mitochondrial matrix. This chain is Mitochondrial glycine transporter, found in Emericella nidulans (strain FGSC A4 / ATCC 38163 / CBS 112.46 / NRRL 194 / M139) (Aspergillus nidulans).